Reading from the N-terminus, the 257-residue chain is Phycoerythrobilin:ferredoxin oxidoreductase (257 aa).

The protein belongs to the HY2 family.

The enzyme catalyses (3Z)-phycoerythrobilin + oxidized 2[4Fe-4S]-[ferredoxin] = 15,16-dihydrobiliverdin + reduced 2[4Fe-4S]-[ferredoxin] + 2 H(+). Functionally, catalyzes the two-electron reduction of the C2 and C3(1) diene system of 15,16-dihydrobiliverdin. This chain is Phycoerythrobilin:ferredoxin oxidoreductase (pebB), found in Prochlorococcus marinus subsp. pastoris (strain CCMP1986 / NIES-2087 / MED4).